The sequence spans 405 residues: MQRNGVMECSVCHSKVVAPSPRSVSRAYDKHRSKISSKYRALNFLLVSGDCILVGLQPILVFMSKVDGKFQFSPISVNFLTEVTKVIFAIVMLIIQSRKQKVGEKPLLSLSTFVQAARNNALLAVPALLYAINNYLKFIMQLYFSPATVKMLSNLKVLVIAILLKFIMRRKFSIIQWEALALLLIGISVNQLSSIPDGTKSFGLAVTTIAYIYTLIFVTVPSLASVYNEYALKSQFDTSIYLQNLFLYGYGAIFNFLGILGTVIFQGPESFDILQGHSRATMFLICNNAAQGILSSFFFKYADTILKKYSSTVATIFTGLASAAFLGHTLTVNFLLGISIVFISMHQFFSPLAKVKDDKPAGALEPEDAQNHRSSDSSFVNMTAGAADDASHLTSTDERKPLLPI.

Topologically, residues methionine 1–asparagine 43 are cytoplasmic. A helical membrane pass occupies residues phenylalanine 44–serine 64. Residues lysine 65–proline 74 lie on the Lumenal side of the membrane. Residues isoleucine 75–isoleucine 95 traverse the membrane as a helical segment. Residues glutamine 96–alanine 121 are Cytoplasmic-facing. A helical membrane pass occupies residues leucine 122 to leucine 142. Residue tyrosine 143 is a topological domain, lumenal. Residues phenylalanine 144–leucine 164 form a helical membrane-spanning segment. Residues lysine 165–lysine 171 are Cytoplasmic-facing. The chain crosses the membrane as a helical span at residues phenylalanine 172–leucine 192. Residues serine 193–glycine 203 lie on the Lumenal side of the membrane. A helical transmembrane segment spans residues leucine 204–alanine 224. The Cytoplasmic portion of the chain corresponds to serine 225–asparagine 244. Residues leucine 245–phenylalanine 265 traverse the membrane as a helical segment. Over glutamine 266 to threonine 281 the chain is Lumenal. The chain crosses the membrane as a helical span at residues methionine 282–alanine 302. The Cytoplasmic segment spans residues aspartate 303 to serine 322. The helical transmembrane segment at alanine 323–isoleucine 343 threads the bilayer. Topologically, residues serine 344 to isoleucine 405 are lumenal. Residues alanine 386–isoleucine 405 are disordered. The span at aspartate 389 to isoleucine 405 shows a compositional bias: basic and acidic residues.

It belongs to the nucleotide-sugar transporter family. CMP-Sialate:CMP antiporter (TC 2.A.7.12) subfamily.

The protein resides in the golgi apparatus membrane. Sugar transporter involved in the transport of CMP-sialic acid from the cytoplasm into the Golgi. May transport important nucleotide sugars such as CMP-Kdo (2-keto-3-deoxy-D-manno-octulosonic acid) in physiological conditions. In Oryza sativa subsp. indica (Rice), this protein is CMP-sialic acid transporter 4.